The chain runs to 741 residues: NAD(P)H-quinone oxidoreductase subunit 5, chloroplastic (741 aa).

Transmembrane regions (helical) follow at residues 9-29, 40-60, 89-109, 125-145, 147-167, 185-205, 219-239, 258-278, 289-311, 327-347, 354-374, 396-416, 425-445, 549-569, 605-625, and 721-741; these read WIIPFLPLPVPMLIGLGLLLF, WAFQSVLLLSIVMIFSMNLSI, IDPLTSIMSILITTVGILVLI, FAYMSFFSTSMLGLVTSSNLI, IYIFWELVGMCSYLLIGFWFT, GDFGLLLGILGFYWITGSFEF, NQVNFLFVTLCAVLLFAGAIA, TPISALIHAATMVAAGIFLVA, HIMNFISLIGIITVFLGATLALA, LGYMMLALGMGSYRSALFHLI, ALLFLGSGSVIHSMETLVGYC, NSFLLGTLSLCGIPPLACFWS, WLYSPIFAIIAWSTAGLTAFY, LFPILILFIFTLFVGFLGIPL, LFSVSIASFGIFIAFFLYKPV, and YLFFYFSYVSIFLVIYYFLNL.

Belongs to the complex I subunit 5 family. As to quaternary structure, NDH is composed of at least 16 different subunits, 5 of which are encoded in the nucleus.

Its subcellular location is the plastid. The protein resides in the chloroplast thylakoid membrane. The catalysed reaction is a plastoquinone + NADH + (n+1) H(+)(in) = a plastoquinol + NAD(+) + n H(+)(out). It catalyses the reaction a plastoquinone + NADPH + (n+1) H(+)(in) = a plastoquinol + NADP(+) + n H(+)(out). Functionally, NDH shuttles electrons from NAD(P)H:plastoquinone, via FMN and iron-sulfur (Fe-S) centers, to quinones in the photosynthetic chain and possibly in a chloroplast respiratory chain. The immediate electron acceptor for the enzyme in this species is believed to be plastoquinone. Couples the redox reaction to proton translocation, and thus conserves the redox energy in a proton gradient. The polypeptide is NAD(P)H-quinone oxidoreductase subunit 5, chloroplastic (ndhF) (Symphyotrichum cordifolium (Heart-leaved aster)).